The primary structure comprises 246 residues: MAAPGPALCLFDVDGTLTAPRQKITKEMDDFLQKLRQKIKIGVVGGSDFEKVQEQLGNDVVEKYDYVFPENGLVAYKDGKLLCRQNIQSHLGEALIQDLINYCLSYIAKIKLPKKRGTFIEFRNGMLNVSPIGRSCSQEERIEFYELDKKENIRQKFVADLRKEFAGKGLTFSIGGQISFDVFPDGWDKRYCLRHVENDGYKTIYFFGDKTMPGGNDHEIFTDPRTMGYSVTAPEDTRRICELLFS.

An N-acetylalanine modification is found at Ala2. The active-site Nucleophile is Asp12. Positions 12 and 14 each coordinate Mg(2+). Asp14 functions as the Proton donor/acceptor in the catalytic mechanism. Residues Arg21, Arg123, Arg134, and Arg141 each contribute to the alpha-D-mannose 1-phosphate site. Lys149 bears the N6-acetyllysine mark. Alpha-D-mannose 1-phosphate-binding residues include Ser179 and Asp181. Mg(2+)-binding residues include Asp209, Phe221, Asp223, and Thr226.

The protein belongs to the eukaryotic PMM family. Homodimer.

Its subcellular location is the cytoplasm. It catalyses the reaction alpha-D-mannose 1-phosphate = D-mannose 6-phosphate. The protein operates within nucleotide-sugar biosynthesis; GDP-alpha-D-mannose biosynthesis; alpha-D-mannose 1-phosphate from D-fructose 6-phosphate: step 2/2. Functionally, involved in the synthesis of the GDP-mannose and dolichol-phosphate-mannose required for a number of critical mannosyl transfer reactions. The polypeptide is Phosphomannomutase 2 (PMM2) (Homo sapiens (Human)).